Here is a 502-residue protein sequence, read N- to C-terminus: 2,3-bisphosphoglycerate-independent phosphoglycerate mutase (502 aa).

Residues Asp-12 and Ser-62 each contribute to the Mn(2+) site. The active-site Phosphoserine intermediate is the Ser-62. Substrate-binding positions include His-123, 152–153 (RD), Arg-183, Arg-189, 255–258 (RPDR), and Lys-329. Mn(2+)-binding residues include Asp-394, His-398, Asp-435, His-436, and His-453.

The protein belongs to the BPG-independent phosphoglycerate mutase family. As to quaternary structure, monomer. It depends on Mn(2+) as a cofactor.

The enzyme catalyses (2R)-2-phosphoglycerate = (2R)-3-phosphoglycerate. It functions in the pathway carbohydrate degradation; glycolysis; pyruvate from D-glyceraldehyde 3-phosphate: step 3/5. In terms of biological role, catalyzes the interconversion of 2-phosphoglycerate and 3-phosphoglycerate. In Malacoplasma penetrans (strain HF-2) (Mycoplasma penetrans), this protein is 2,3-bisphosphoglycerate-independent phosphoglycerate mutase.